Consider the following 175-residue polypeptide: NADH-ubiquinone oxidoreductase chain 6 (175 aa).

5 helical membrane-spanning segments follow: residues 1–21 (MMLYIVFILSVIFVMGFVGFS), 25–45 (SPIYGGLGLIVSGGVGCGIVL), 47–67 (FGGSFLGLMVFLIYLGGMMVV), 88–108 (AVLGAFVTGLLMEFFMVYYVL), and 149–169 (YGTWLVIVTGWSLLIGVVVIM).

It belongs to the complex I subunit 6 family. Core subunit of respiratory chain NADH dehydrogenase (Complex I) which is composed of 45 different subunits.

The protein localises to the mitochondrion inner membrane. It carries out the reaction a ubiquinone + NADH + 5 H(+)(in) = a ubiquinol + NAD(+) + 4 H(+)(out). In terms of biological role, core subunit of the mitochondrial membrane respiratory chain NADH dehydrogenase (Complex I) which catalyzes electron transfer from NADH through the respiratory chain, using ubiquinone as an electron acceptor. Essential for the catalytic activity and assembly of complex I. The protein is NADH-ubiquinone oxidoreductase chain 6 (MT-ND6) of Bos indicus (Zebu).